Here is an 88-residue protein sequence, read N- to C-terminus: Large ribosomal subunit protein bL27 (88 aa).

The segment at 1–21 is disordered; sequence MAHKKGQGSTQNNRDSAGRRL.

The protein belongs to the bacterial ribosomal protein bL27 family.

In Helicobacter pylori (strain J99 / ATCC 700824) (Campylobacter pylori J99), this protein is Large ribosomal subunit protein bL27.